The following is a 392-amino-acid chain: Cytochrome b (392 aa).

Helical transmembrane passes span 38 to 58 (FGSL…FLAM), 82 to 104 (WLLR…LHIF), 119 to 139 (VRCL…TGYV), and 185 to 205 (FFSL…LHLA). Heme b-binding residues include H88 and H102. Residues H189 and H203 each contribute to the heme b site. A ubiquinone is bound at residue H208. 4 consecutive transmembrane segments (helical) span residues 231–251 (FYVK…IWIF), 295–315 (SGGV…PFFK), 327–347 (IHQG…WIGC), and 354–373 (FVTI…AITP).

The protein belongs to the cytochrome b family. The main subunits of complex b-c1 are: cytochrome b, cytochrome c1 and the Rieske protein. Requires heme b as cofactor.

It localises to the mitochondrion inner membrane. Functionally, component of the ubiquinol-cytochrome c reductase complex (complex III or cytochrome b-c1 complex) that is part of the mitochondrial respiratory chain. The b-c1 complex mediates electron transfer from ubiquinol to cytochrome c. Contributes to the generation of a proton gradient across the mitochondrial membrane that is then used for ATP synthesis. This chain is Cytochrome b (MT-CYB), found in Pisum sativum (Garden pea).